A 1009-amino-acid polypeptide reads, in one-letter code: Glutamate receptor ionotropic, delta-2 (1009 aa).

Positions 1–23 are cleaved as a signal peptide; that stretch reads MKVFPAVLFLITFWSLEWEPVLP. The Extracellular segment spans residues 24–566; it reads DSIIHIGAIF…DMFACLAPFD (543 aa). N-linked (GlcNAc...) asparagine glycosylation is found at asparagine 293, asparagine 306, asparagine 390, and asparagine 426. Positions 531, 534, and 535 each coordinate Ca(2+). Residues 567–587 traverse the membrane as a helical segment; it reads LSLWACIAGTVLLVGTLVYLL. Residues 588–635 lie on the Cytoplasmic side of the membrane; the sequence is NWLNPPRLPMGSVSSTTLYNSMWFVYGSFVQQGGEVPYTTLATRMMMG. A helical membrane pass occupies residues 636-656; the sequence is VWWLFALIVISSYTANLAAFL. The Extracellular segment spans residues 657 to 830; that stretch reads TISRIENSIQ…KSGSALDIHS (174 aa). The N-linked (GlcNAc...) asparagine glycan is linked to asparagine 713. Residues aspartate 753, aspartate 755, and serine 757 each coordinate Ca(2+). Residues 831 to 851 form a helical membrane-spanning segment; sequence FAGVFFVLAAGVVLSCLIATV. Over 852-1009 the chain is Cytoplasmic; that stretch reads ETWWTRRKGS…GNDPDRGTSI (158 aa). Residues 989–1009 form a disordered region; sequence YQPTPAPNFSYGNDPDRGTSI.

Belongs to the glutamate-gated ion channel (TC 1.A.10.1) family. GRID2 subfamily. Tetramer; dimer of dimers. Expressed in cerebellar Purkinje cells, in crest cells in the medial octavolateral nucleus and in type I neurons of the optic tectum.

It is found in the postsynaptic cell membrane. It carries out the reaction Ca(2+)(in) = Ca(2+)(out). The catalysed reaction is Na(+)(in) = Na(+)(out). Member of the ionotropic glutamate receptor family, which plays a crucial role in synaptic organization and signal transduction in the central nervous system. Although it shares structural features with ionotropic glutamate receptors, does not bind glutamate as a primary ligand. Promotes synaptogenesis and mediates the D-Serine-dependent long term depression signals and AMPA receptor endocytosis of cerebellar parallel fiber-Purkinje cell (PF-PC) synapses through the NRX1B-CBLN1-GRID2 triad complex. In the presence of neurexins and cerebellins, forms cation-selective channels that are proposed to be gated by glycine and D-serine. However, recent research disputes this ligand-gated cation channel activity. Cation-selective ion channel activity can be triggered by GRM1 in Purkinje cells. In Danio rerio (Zebrafish), this protein is Glutamate receptor ionotropic, delta-2.